Here is a 197-residue protein sequence, read N- to C-terminus: Xanthine phosphoribosyltransferase (197 aa).

Xanthine is bound by residues Leu-20 and Asn-27. 128–132 (ANGQA) is a binding site for 5-phospho-alpha-D-ribose 1-diphosphate. Residue Lys-156 participates in xanthine binding.

This sequence belongs to the purine/pyrimidine phosphoribosyltransferase family. Xpt subfamily. In terms of assembly, homodimer.

It localises to the cytoplasm. It carries out the reaction XMP + diphosphate = xanthine + 5-phospho-alpha-D-ribose 1-diphosphate. It participates in purine metabolism; XMP biosynthesis via salvage pathway; XMP from xanthine: step 1/1. Functionally, converts the preformed base xanthine, a product of nucleic acid breakdown, to xanthosine 5'-monophosphate (XMP), so it can be reused for RNA or DNA synthesis. The polypeptide is Xanthine phosphoribosyltransferase (Bacillus cereus (strain G9842)).